We begin with the raw amino-acid sequence, 378 residues long: Spermidine/putrescine import ATP-binding protein PotA (378 aa).

One can recognise an ABC transporter domain in the interval 18–248; the sequence is VQLAGIRKCF…PKNLFVAGFI (231 aa). Position 50 to 57 (50 to 57) interacts with ATP; that stretch reads GPSGCGKT.

The protein belongs to the ABC transporter superfamily. Spermidine/putrescine importer (TC 3.A.1.11.1) family. As to quaternary structure, the complex is composed of two ATP-binding proteins (PotA), two transmembrane proteins (PotB and PotC) and a solute-binding protein (PotD).

It localises to the cell inner membrane. It carries out the reaction ATP + H2O + polyamine-[polyamine-binding protein]Side 1 = ADP + phosphate + polyamineSide 2 + [polyamine-binding protein]Side 1.. In terms of biological role, part of the ABC transporter complex PotABCD involved in spermidine/putrescine import. Responsible for energy coupling to the transport system. The protein is Spermidine/putrescine import ATP-binding protein PotA of Shigella boydii serotype 4 (strain Sb227).